Reading from the N-terminus, the 366-residue chain is Mitochondrial carrier protein MTM1 (366 aa).

3 Solcar repeats span residues 14–149 (ERML…IRDV), 156–250 (YPTL…CKER), and 266–359 (VHFI…SKKV). A run of 6 helical transmembrane segments spans residues 17 to 36 (LSAG…MDVV), 126 to 146 (SLTL…YEYI), 162 to 182 (LFCG…LELV), 229 to 249 (TLWR…LCKE), 268 to 286 (FINS…AICT), and 331 to 352 (LYTG…MISS).

Belongs to the mitochondrial carrier (TC 2.A.29) family.

The protein localises to the mitochondrion inner membrane. Functionally, involved in the mitochondrial activation of SOD2 by specifically facilitating insertion of the essential manganese cofactor. Has the ability to activate iron regulon in an iron-dependent manner. Responds to calorie restriction (CR) strength. The polypeptide is Mitochondrial carrier protein MTM1 (MTM1) (Saccharomyces cerevisiae (strain ATCC 204508 / S288c) (Baker's yeast)).